A 231-amino-acid polypeptide reads, in one-letter code: dTTP/UTP pyrophosphatase (231 aa).

The Proton acceptor role is filled by D85.

This sequence belongs to the Maf family. YhdE subfamily. A divalent metal cation is required as a cofactor.

It localises to the cytoplasm. The enzyme catalyses dTTP + H2O = dTMP + diphosphate + H(+). It catalyses the reaction UTP + H2O = UMP + diphosphate + H(+). In terms of biological role, nucleoside triphosphate pyrophosphatase that hydrolyzes dTTP and UTP. May have a dual role in cell division arrest and in preventing the incorporation of modified nucleotides into cellular nucleic acids. This is dTTP/UTP pyrophosphatase from Psychrobacter arcticus (strain DSM 17307 / VKM B-2377 / 273-4).